The primary structure comprises 819 residues: Regulator of G-protein signaling rgs-7 (819 aa).

Residues 1–11 (MSDEDADEYDD) are compositionally biased toward acidic residues. Disordered stretches follow at residues 1–51 (MSDE…EMLW), 112–135 (GDDSSFRSRDRFVPPRRPRMGYGS), and 149–259 (SSTY…HNNE). Over residues 32–44 (YQDTTESTGPSEA) the composition is skewed to polar residues. Positions 112-124 (GDDSSFRSRDRFV) are enriched in basic and acidic residues. Positions 149 to 166 (SSTYSSSSEAHRLSSLRA) are enriched in low complexity. Polar residues predominate over residues 173–185 (QLTSTTTSFQPLS). Basic residues predominate over residues 213–223 (RMYRKNPKYRR). Residues 234 to 259 (SRLEESTSQESERAVTPESWMEHNNE) show a composition bias toward basic and acidic residues. Residues 290–429 (KHKDIRGIIF…KASQVVGDPF (140 aa)) form the C2 domain. Disordered regions lie at residues 515 to 594 (YRST…DDNG) and 617 to 640 (FTFSPKHSSSKTNLRQLNGREEDK). Polar residues-rich tracts occupy residues 517 to 533 (STGSSDMRGRSTNNLLD), 559 to 568 (PSITTTTSEN), and 617 to 632 (FTFSPKHSSSKTNLRQ). The RGS domain maps to 682-800 (SFESLLNNKF…LRDRLFLDLL (119 aa)).

As to quaternary structure, interacts with egl-30.

Functionally, inhibits signal transduction by increasing the GTPase activity of G protein alpha subunit egl-30 (G-alpha(q)), thereby driving it into its inactive GDP-bound form. May organize egl-30 into a stable multiprotein signaling complex, and thereby persistently inhibit egl-30 when triggered by calcium or phospholipids. The polypeptide is Regulator of G-protein signaling rgs-7 (rgs-7) (Caenorhabditis elegans).